Reading from the N-terminus, the 207-residue chain is 8-oxoguanine DNA glycosylase/AP lyase (207 aa).

Active-site residues include Lys128 and Asp146.

The protein belongs to the type-2 OGG1 family.

The enzyme catalyses 2'-deoxyribonucleotide-(2'-deoxyribose 5'-phosphate)-2'-deoxyribonucleotide-DNA = a 3'-end 2'-deoxyribonucleotide-(2,3-dehydro-2,3-deoxyribose 5'-phosphate)-DNA + a 5'-end 5'-phospho-2'-deoxyribonucleoside-DNA + H(+). Its function is as follows. Catalyzes the excision of an oxidatively damaged form of guanine (7,8-dihydro-8-oxoguanine = 8-oxoG) from DNA. Also cleaves the DNA backbone at apurinic/apyrimidinic sites (AP sites). The polypeptide is 8-oxoguanine DNA glycosylase/AP lyase (Saccharolobus islandicus (strain L.S.2.15 / Lassen #1) (Sulfolobus islandicus)).